The following is a 284-amino-acid chain: MSAQLINGKEVSQKRLQAVAEAVAQRQQDNLHMPCLAVVLVGGDPASAVYVRNKKTACQKCGIKSLSYELPESTSQEELLALVDRLNADSEVDGILVQLPLPKHLDSQAVLERISPDKDVDGFHPYNVGRLAVKMPLMRPCTPKGVMTLLEAYGIDPKGKKAVVVGASNIVGRPQALELLLARATVTVCHSATENLTDEVAGADILVVGVGIPNFVKGEWIKPGAVVIDVGINRLDDGSLCGDVEFETAKERAAMITPVPGGVGPMTIATLMENTLHAASLHDA.

Residues 166 to 168, S191, and I232 contribute to the NADP(+) site; that span reads GAS.

The protein belongs to the tetrahydrofolate dehydrogenase/cyclohydrolase family. As to quaternary structure, homodimer.

The catalysed reaction is (6R)-5,10-methylene-5,6,7,8-tetrahydrofolate + NADP(+) = (6R)-5,10-methenyltetrahydrofolate + NADPH. The enzyme catalyses (6R)-5,10-methenyltetrahydrofolate + H2O = (6R)-10-formyltetrahydrofolate + H(+). It functions in the pathway one-carbon metabolism; tetrahydrofolate interconversion. Catalyzes the oxidation of 5,10-methylenetetrahydrofolate to 5,10-methenyltetrahydrofolate and then the hydrolysis of 5,10-methenyltetrahydrofolate to 10-formyltetrahydrofolate. This Neisseria meningitidis serogroup A / serotype 4A (strain DSM 15465 / Z2491) protein is Bifunctional protein FolD.